The sequence spans 783 residues: Probable phosphoketolase (783 aa).

The protein belongs to the XFP family. Thiamine diphosphate serves as cofactor.

This Rhodopseudomonas palustris (strain TIE-1) protein is Probable phosphoketolase.